Consider the following 493-residue polypeptide: Desmethylyatein synthase (493 aa).

A helical transmembrane segment spans residues 1–21 (METFQCLTLFLLFISTVFILK). Cysteine 434 serves as a coordination point for heme.

The protein belongs to the cytochrome P450 family. Heme serves as cofactor.

It is found in the membrane. It catalyses the reaction (-)-bursehernin + reduced [NADPH--hemoprotein reductase] + O2 = (-)-5'-demethylyatein + oxidized [NADPH--hemoprotein reductase] + H2O + H(+). It participates in aromatic compound metabolism; phenylpropanoid biosynthesis. Functionally, cytochrome P450 involved in the biosynthesis of etoposide, a chemotherapeutic compound of the topoisomerase inhibitor family. Catalyzes the conversion of bursehernin to demethylyatein. This is Desmethylyatein synthase from Sinopodophyllum hexandrum (Himalayan may apple).